Reading from the N-terminus, the 99-residue chain is DNA-binding protein HmvA (99 aa).

The interaction with DNA stretch occupies residues Lys-52–Lys-55.

The protein belongs to the archaeal histone HMF family. As to quaternary structure, homodimer or heterodimer with another histone. Dimers then assemble into higher oligomers, with the DNA wrapped around the protein core.

Its subcellular location is the cytoplasm. It is found in the chromosome. Its function is as follows. Binds and compact DNA (95 to 150 base pairs) to form nucleosome-like structures that contain positive DNA supercoils. Increases the resistance of DNA to thermal denaturation (in vitro). In Methanococcus voltae, this protein is DNA-binding protein HmvA (hmvA).